The following is a 61-amino-acid chain: Transcription elongation factor Spt4 (61 aa).

Cys6, Cys9, Cys18, and Cys21 together coordinate Zn(2+).

It belongs to the archaeal Spt4 family. Heterodimer composed of Spt4 and Spt5.

In terms of biological role, stimulates transcription elongation. In Pyrococcus furiosus (strain ATCC 43587 / DSM 3638 / JCM 8422 / Vc1), this protein is Transcription elongation factor Spt4.